The following is a 76-amino-acid chain: MNKALFLCLVVLCAAVVFAAEDLQKAKHAPFKRAAPCFCSGKPGRGDLWIFRGTCPGGYGYTSNCYKWPNICCYPH.

Residues M1 to A19 form the signal peptide. Positions A20–F31 are excised as a propeptide. Disulfide bonds link C37/C72, C39/C65, and C55/C73. Positions R45–D47 match the Cell attachment site motif.

The protein belongs to the sea anemone type 3 (BDS) potassium channel toxin family. In terms of tissue distribution, moderately expressed in the ectodermal tissue from the distal and proximal tentacles, body wall, and oral disk.

It localises to the secreted. The protein resides in the nematocyst. Is member of a fraction that shows antiangiogenic activity, since it inhibits human microvascular endothelial cells (HMEC) tubulogenesis. This protein could be a kunitz-type inhibitor with a RGD motif that could block angiogenesis in binding on integrins. Blocks Kv3 voltage-gated potassium channels. Reduces blood pressure. The protein is Kappa-actitoxin-Avd4e of Anemonia viridis (Snakelocks anemone).